Consider the following 120-residue polypeptide: V-type proton ATPase subunit F (120 aa).

Belongs to the V-ATPase F subunit family. In terms of assembly, V-ATPase is a heteromultimeric enzyme composed of a peripheral catalytic V1 complex (components A to H) attached to an integral membrane V0 proton pore complex (components: a, c, c', c'', d, e, f and VOA1).

The protein resides in the vacuole membrane. Functionally, subunit of the V1 complex of vacuolar(H+)-ATPase (V-ATPase), a multisubunit enzyme composed of a peripheral complex (V1) that hydrolyzes ATP and a membrane integral complex (V0) that translocates protons. V-ATPase is responsible for acidifying and maintaining the pH of intracellular compartments. In Schizosaccharomyces pombe (strain 972 / ATCC 24843) (Fission yeast), this protein is V-type proton ATPase subunit F.